We begin with the raw amino-acid sequence, 651 residues long: UvrABC system protein C (651 aa).

In terms of domain architecture, GIY-YIG spans 21-100 (TEPGCYLMRD…IKNQQPHFNV (80 aa)). In terms of domain architecture, UVR spans 210 to 245 (DELRQLLNQQMERYAERLDFESAARIRDQLQGIDQL).

Belongs to the UvrC family. As to quaternary structure, interacts with UvrB in an incision complex.

It localises to the cytoplasm. Its function is as follows. The UvrABC repair system catalyzes the recognition and processing of DNA lesions. UvrC both incises the 5' and 3' sides of the lesion. The N-terminal half is responsible for the 3' incision and the C-terminal half is responsible for the 5' incision. The sequence is that of UvrABC system protein C from Synechococcus sp. (strain CC9311).